Reading from the N-terminus, the 389-residue chain is Succinate--CoA ligase [ADP-forming] subunit beta (389 aa).

The ATP-grasp domain maps to 9–246; sequence KEILRRHNAN…ITEEDPYEVK (238 aa). ATP-binding positions include K48, 55–57, E101, L104, and E109; that span reads GRG. Mg(2+) is bound by residues N201 and D215. Residues N266 and 323–325 contribute to the substrate site; that span reads GIV.

Belongs to the succinate/malate CoA ligase beta subunit family. In terms of assembly, heterotetramer of two alpha and two beta subunits. Requires Mg(2+) as cofactor.

The enzyme catalyses succinate + ATP + CoA = succinyl-CoA + ADP + phosphate. It carries out the reaction GTP + succinate + CoA = succinyl-CoA + GDP + phosphate. The protein operates within carbohydrate metabolism; tricarboxylic acid cycle; succinate from succinyl-CoA (ligase route): step 1/1. Functionally, succinyl-CoA synthetase functions in the citric acid cycle (TCA), coupling the hydrolysis of succinyl-CoA to the synthesis of either ATP or GTP and thus represents the only step of substrate-level phosphorylation in the TCA. The beta subunit provides nucleotide specificity of the enzyme and binds the substrate succinate, while the binding sites for coenzyme A and phosphate are found in the alpha subunit. In Leptospira biflexa serovar Patoc (strain Patoc 1 / Ames), this protein is Succinate--CoA ligase [ADP-forming] subunit beta.